We begin with the raw amino-acid sequence, 341 residues long: Ectoine-binding periplasmic protein TeaA (341 aa).

The signal sequence occupies residues 1-25 (MKAYKLLTTASIGALMLGMSTAAYS). L-ectoine is bound by residues Glu-34, Arg-169, Asn-209, Trp-213, and Phe-234.

It belongs to the bacterial solute-binding protein 7 family. As to quaternary structure, monomer. The complex comprises the extracytoplasmic solute receptor protein TeaA, and the two transmembrane proteins TeaB and TeaC.

It localises to the periplasm. In terms of biological role, part of the tripartite ATP-independent periplasmic (TRAP) transport system TeaABC involved in the uptake of ectoine and hydroxyectoine in response to osmotic upshock. Probably functions as a recovery system for synthesized ectoine that leaks out of the cell. Binds ectoine with high affinity. Affinity for hydroxyectoine is approximately 20-fold lower. This is Ectoine-binding periplasmic protein TeaA (teaA) from Halomonas elongata (strain ATCC 33173 / DSM 2581 / NBRC 15536 / NCIMB 2198 / 1H9).